The following is a 264-amino-acid chain: Transformer-2 sex-determining protein (264 aa).

A disordered region spans residues 1–96 (MDREPLSSGR…HKSREHPQAS (96 aa)). Positions 13-22 (CSARYKHKRS) are enriched in basic residues. A compositionally biased stretch (low complexity) spans 23–33 (ASSSSAGTTSS). The residue at position 40 (S40) is a Phosphoserine. Basic residues predominate over residues 47-61 (SRRHQRSSSRRRSRS). Over residues 71–85 (EPRHRSGRSSRDRER) the composition is skewed to basic and acidic residues. An RRM domain is found at 97-175 (RCIGVFGLNT…RRIRVDFSIT (79 aa)). Residues 176–196 (QRAHTPTPGVYLGRQPRGKAP) are linker. The interval 179–264 (HTPTPGVYLG…PQLRRTSSRY (86 aa)) is disordered. T180 bears the Phosphothreonine mark. The segment covering 191-206 (PRGKAPRSFSPRRGRR) has biased composition (basic residues). Positions 207-234 (VYHDRSASPYDNYRDRYDYRNDRYDRNL) are enriched in basic and acidic residues. Residues S212 and S214 each carry the phosphoserine modification. The span at 235-250 (RRSPSRNRYTRNRSYS) shows a compositional bias: basic residues. At S254 the chain carries Phosphoserine.

The protein belongs to the splicing factor SR family. Post-translationally, extensively phosphorylated on serine residues in the RS domain. Isoform Tmaj and isoform Tmin are expressed in males and females. Isoform msTmaj and isoform msTmin are present only in male germ cells.

Its function is as follows. Required for female sex determination in somatic cells and for spermatogenesis in male germ cells. Positive regulator of female-specific splicing and/or polyadenylation of doublesex (dsx) pre-mRNA. Splicing requires an enhancer complex, dsxRE (dsx repeat element: which contains six copies of a 13-nucleotide repeat and a purine-rich enhancer (PRE)). DsxRE is formed through cooperative interactions between tra, tra2 and the sr proteins, and these interactions require both the repeat sequences and PRE. PRE is required for specific binding of tra2 to the dsxRE. Protein-RNA and protein-protein interactions are involved in tra-2 dependent activation and repression of alternative splicing. Together with tra-2, plays a role in switching fru splicing from the male-specific pattern to the female-specific pattern through activation of the female-specific fru 5'-splice site. This Drosophila melanogaster (Fruit fly) protein is Transformer-2 sex-determining protein (tra2).